Consider the following 688-residue polypeptide: Eukaryotic translation initiation factor 3 subunit B (688 aa).

Residues Met-1 to Val-32 form a disordered region. Residues Tyr-9–Val-32 show a composition bias toward acidic residues. An RRM domain is found at Asn-57–Asp-141. 6 WD repeats span residues Arg-208–Lys-246, Phe-247–Ser-287, Asp-291–Lys-329, Ile-332–Glu-367, Glu-440–Met-482, and Gly-527–Asn-572. Positions Arg-613 to Val-642 form a coiled coil.

The protein belongs to the eIF-3 subunit B family. As to quaternary structure, component of the eukaryotic translation initiation factor 3 (eIF-3) complex.

Its subcellular location is the cytoplasm. RNA-binding component of the eukaryotic translation initiation factor 3 (eIF-3) complex, which is involved in protein synthesis of a specialized repertoire of mRNAs and, together with other initiation factors, stimulates binding of mRNA and methionyl-tRNAi to the 40S ribosome. The eIF-3 complex specifically targets and initiates translation of a subset of mRNAs involved in cell proliferation. The sequence is that of Eukaryotic translation initiation factor 3 subunit B from Aedes aegypti (Yellowfever mosquito).